The following is a 328-amino-acid chain: Formimidoylglutamase (328 aa).

Residues histidine 133, aspartate 159, histidine 161, aspartate 163, aspartate 253, and aspartate 255 each contribute to the Mn(2+) site.

This sequence belongs to the arginase family. Mn(2+) serves as cofactor.

It carries out the reaction N-formimidoyl-L-glutamate + H2O = formamide + L-glutamate. The protein operates within amino-acid degradation; L-histidine degradation into L-glutamate; L-glutamate from N-formimidoyl-L-glutamate (hydrolase route): step 1/1. In terms of biological role, catalyzes the conversion of N-formimidoyl-L-glutamate to L-glutamate and formamide. This chain is Formimidoylglutamase, found in Streptococcus pyogenes serotype M6 (strain ATCC BAA-946 / MGAS10394).